Reading from the N-terminus, the 24-residue chain is Xenoposin-precursor fragment B1 (24 aa).

Expressed by the skin glands.

The protein localises to the secreted. Has antibacterial activity. This Xenopus borealis (Kenyan clawed frog) protein is Xenoposin-precursor fragment B1.